The primary structure comprises 101 residues: Small ribosomal subunit protein uS14 (101 aa).

Belongs to the universal ribosomal protein uS14 family. As to quaternary structure, part of the 30S ribosomal subunit. Contacts proteins S3 and S10.

Binds 16S rRNA, required for the assembly of 30S particles and may also be responsible for determining the conformation of the 16S rRNA at the A site. The polypeptide is Small ribosomal subunit protein uS14 (Leptothrix cholodnii (strain ATCC 51168 / LMG 8142 / SP-6) (Leptothrix discophora (strain SP-6))).